The following is a 138-amino-acid chain: Large ribosomal subunit protein uL16 (138 aa).

It belongs to the universal ribosomal protein uL16 family. As to quaternary structure, part of the 50S ribosomal subunit.

Functionally, binds 23S rRNA and is also seen to make contacts with the A and possibly P site tRNAs. This Ureaplasma urealyticum serovar 10 (strain ATCC 33699 / Western) protein is Large ribosomal subunit protein uL16.